Consider the following 500-residue polypeptide: Na(+)/H(+) antiporter NhaB (500 aa).

12 helical membrane-spanning segments follow: residues 34 to 54, 58 to 78, 96 to 116, 129 to 149, 150 to 170, 205 to 225, 241 to 261, 311 to 331, 350 to 370, 394 to 414, 450 to 470, and 477 to 497; these read LLLA…QFIF, MALK…ALLL, VILL…LLLF, AVLS…LDAL, TVTA…HRVA, LLMH…VGEP, FFLK…VTCV, ILIV…LMVI, FQDA…VAVI, MLYL…VATI, ATPN…APLI, and MVWM…WAVT.

Belongs to the NhaB Na(+)/H(+) (TC 2.A.34) antiporter family.

Its subcellular location is the cell inner membrane. The enzyme catalyses 2 Na(+)(in) + 3 H(+)(out) = 2 Na(+)(out) + 3 H(+)(in). In terms of biological role, na(+)/H(+) antiporter that extrudes sodium in exchange for external protons. The chain is Na(+)/H(+) antiporter NhaB from Pseudomonas entomophila (strain L48).